A 325-amino-acid polypeptide reads, in one-letter code: Replication factor C small subunit (325 aa).

An ATP-binding site is contributed by 44–51 (GPPGTGKT).

It belongs to the activator 1 small subunits family. RfcS subfamily. In terms of assembly, heteromultimer composed of small subunits (RfcS) and large subunits (RfcL).

Functionally, part of the RFC clamp loader complex which loads the PCNA sliding clamp onto DNA. The sequence is that of Replication factor C small subunit from Thermofilum pendens (strain DSM 2475 / Hrk 5).